Reading from the N-terminus, the 359-residue chain is Serine/threonine-protein phosphatase 2A activator 2 (359 aa).

Belongs to the PTPA-type PPIase family.

The protein resides in the cytoplasm. The catalysed reaction is [protein]-peptidylproline (omega=180) = [protein]-peptidylproline (omega=0). In terms of biological role, PPIases accelerate the folding of proteins. It catalyzes the cis-trans isomerization of proline imidic peptide bonds in oligopeptides. Acts as a regulatory subunit for PP2A-like phosphatases modulating their activity or substrate specificity, probably by inducing a conformational change in the catalytic subunit, a direct target of the PPIase. Can reactivate inactive phosphatase PP2A-phosphatase methylesterase complexes (PP2Ai) in presence of ATP and Mg(2+) by dissociating the inactive form from the complex. The protein is Serine/threonine-protein phosphatase 2A activator 2 (RRD2) of Eremothecium gossypii (strain ATCC 10895 / CBS 109.51 / FGSC 9923 / NRRL Y-1056) (Yeast).